A 156-amino-acid chain; its full sequence is Cyanate hydratase (156 aa).

Residues Arg96, Glu99, and Ser122 contribute to the active site.

It belongs to the cyanase family.

It catalyses the reaction cyanate + hydrogencarbonate + 3 H(+) = NH4(+) + 2 CO2. Catalyzes the reaction of cyanate with bicarbonate to produce ammonia and carbon dioxide. The chain is Cyanate hydratase from Burkholderia pseudomallei (strain 1106a).